A 47-amino-acid polypeptide reads, in one-letter code: Delta-ctenitoxin-Asp2e (47 aa).

5 cysteine pairs are disulfide-bonded: C3–C17, C10–C23, C14–C46, C16–C31, and C25–C29.

In terms of tissue distribution, expressed by the venom gland.

The protein localises to the secreted. Its function is as follows. Inhibits the inactivation of voltage-gated sodium channels (Nav). This chain is Delta-ctenitoxin-Asp2e, found in Ancylometes sp. (South American fishing spider).